The chain runs to 68 residues: Protein transport protein Sec61 subunit gamma (68 aa).

At 1–32 the chain is on the cytoplasmic side; the sequence is MDQVMQFVEPSRQFVKDSIRLVKRCTKPDRKE. A helical membrane pass occupies residues 33–61; it reads FQKIAMATAIGFAIMGFIGFFVKLIHIPI. Topologically, residues 62-68 are extracellular; that stretch reads NNIIVGS.

The protein belongs to the SecE/SEC61-gamma family. As to quaternary structure, the SEC61 channel-forming translocon complex consists of channel-forming core components SEC61A1, SEC61B and SEC61G and different auxiliary components such as SEC62 and SEC63. The SEC61 channel associates with the multi-pass translocon (MPT) complex.

Its subcellular location is the endoplasmic reticulum membrane. In terms of biological role, component of SEC61 channel-forming translocon complex that mediates transport of signal peptide-containing precursor polypeptides across the endoplasmic reticulum (ER). Forms a ribosome receptor and a gated pore in the ER membrane, both functions required for cotranslational translocation of nascent polypeptides. The SEC61 channel is also involved in ER membrane insertion of transmembrane proteins: it mediates membrane insertion of the first few transmembrane segments of proteins, while insertion of subsequent transmembrane regions of multi-pass membrane proteins is mediated by the multi-pass translocon (MPT) complex. The polypeptide is Protein transport protein Sec61 subunit gamma (sec61g) (Xenopus laevis (African clawed frog)).